A 177-amino-acid polypeptide reads, in one-letter code: Meiotic chromosome segregation protein C17A2.07c (177 aa).

The disordered stretch occupies residues 71–90; sequence EDDSINKPTEEADEAPRTQL. Residues 74-86 are compositionally biased toward basic and acidic residues; that stretch reads SINKPTEEADEAP.

Its subcellular location is the nucleus. In terms of biological role, involved in meiotic chromosome segregation. This chain is Meiotic chromosome segregation protein C17A2.07c, found in Schizosaccharomyces pombe (strain 972 / ATCC 24843) (Fission yeast).